Reading from the N-terminus, the 475-residue chain is Peripherin (475 aa).

Positions 1–42 are disordered; sequence MPSSASMSHHHSSGLRSSISSTSYRRTFGPPPSLSPGAFSYS. The tract at residues 1-103 is head; that stretch reads MPSSASMSHH…FLATRSNEKQ (103 aa). The segment covering 14 to 26 has biased composition (low complexity); it reads GLRSSISSTSYRR. Tyrosine 24 bears the 3'-nitrotyrosine mark. 2 positions are modified to phosphoserine: serine 35 and serine 57. The residue at position 66 (serine 66) is a Phosphoserine; by PKB/AKT1. An IF rod domain is found at 101-411; it reads EKQELQELND…KLLEGEESRI (311 aa). The coil 1A stretch occupies residues 104-136; sequence ELQELNDRFANFIEKVRFLEQQNAALRGELSQA. A linker 1 region spans residues 137–147; it reads RGQEPARADQL. The interval 148–243 is coil 1B; the sequence is CQQELRELRR…KLHEEELRDL (96 aa). Residues 244–266 form a linker 2 region; sequence QVSVESQQVQQVEVEATVKPELT. The coil 2 stretch occupies residues 267–409; the sequence is AALRDIRAQY…YRKLLEGEES (143 aa). Tyrosine 383 is subject to 3'-nitrotyrosine. The interval 410 to 475 is tail; sequence RISVPVHSFA…DLDKSSIHSY (66 aa). The segment at 453 to 475 is disordered; it reads EKVVTESQKEQHSDLDKSSIHSY. Tyrosine 475 is subject to Phosphotyrosine.

The protein belongs to the intermediate filament family. As to quaternary structure, forms homodimers (in vitro). Homopolymerizes into a filamentous network (in vitro). Forms heterodimers with NEFL, NEFM or NEFH (in vitro). Interacts with DST (via C-terminus). Interacts with RAB7A; the interaction is direct. Interacts with PRKCE (via phorbol-ester/DAG-type 2 domain). In terms of processing, phosphorylated; phosphorylation increases after nerve injury in regenerating neurons. Expressed in the sciatic nerve and at very low levels in the central nervous system (at protein level). Expressed in the spinal cord, in the sciatic nerve at the level of the dorsal root ganglion and in trigeminal nerves (at protein level). Expressed in the cranial nerves in the hindbrain, including the sensory and motor trigeminal neurons, the mesencephalic trigeminal neurons, the spinal trigeminal neurons, and in the facial nerve (at protein level). Expressed in the cerebellum, with expression in the inferior cerebellar peduncle and the lateral deep cerebellar nucleus (at protein level). Expressed in vestibulocochlear neurons, such as the anteroventral cochlear nucleus, the dorsal cochlear nucleus, the superficial granule cell layer and the granule cell lamina (at protein level). Expressed in glossopharyngeal, vagal and hypoglossal neurons (at protein level). Expressed in peripheral sensory neurons, in the dorsal root ganglia and the spinal cord, and to a lower extent in motor neurons. Expressed in the optic tract of the central nervous system, especially in the lateral geniculate nucleus and the superior colliculus. Expressed in neurons of the pineal stalk in the cortex. Expressed in the spinal trigeminal tract of the midbrain, in the medulla and in the medial cerebellar peduncle.

It is found in the cytoplasm. The protein localises to the cytoskeleton. Its subcellular location is the cell projection. The protein resides in the axon. It localises to the perikaryon. Class-III neuronal intermediate filament protein. May form an independent structural network without the involvement of other neurofilaments or may cooperate with the neuronal intermediate filament proteins NEFL, NEFH, NEFM and INA to form filamentous networks. Assembly of the neuronal intermediate filaments may be regulated by RAB7A. Plays a role in the development of unmyelinated sensory neurons. May be involved in axon elongation and axon regeneration after injury. Inhibits neurite extension in type II spiral ganglion neurons in the cochlea. This Mus musculus (Mouse) protein is Peripherin (Prph).